A 187-amino-acid polypeptide reads, in one-letter code: Ribosome maturation factor RimP (187 aa).

Belongs to the RimP family.

The protein resides in the cytoplasm. In terms of biological role, required for maturation of 30S ribosomal subunits. This chain is Ribosome maturation factor RimP, found in Phenylobacterium zucineum (strain HLK1).